The following is a 655-amino-acid chain: p-hydroxybenzoic acid efflux pump subunit AaeB (655 aa).

At 1 to 12 the chain is on the periplasmic side; that stretch reads MGIFSIANQHIR. A helical transmembrane segment spans residues 13–33; it reads FAVKLATAIVLALFVGFHFQL. The Cytoplasmic portion of the chain corresponds to 34–37; the sequence is ETPR. Residues 38–58 traverse the membrane as a helical segment; that stretch reads WAVLTAAIVAAGPAFAAGGEP. Topologically, residues 59 to 68 are periplasmic; that stretch reads YSGAIRYRGF. A helical transmembrane segment spans residues 69 to 89; it reads LRIIGTFIGCIAGLVIIIAMI. At 90-92 the chain is on the cytoplasmic side; sequence RAP. The chain crosses the membrane as a helical span at residues 93-113; that stretch reads LLMILVCCIWAGFCTWISSLV. Over 114 to 120 the chain is Periplasmic; sequence RIENSYA. A helical membrane pass occupies residues 121-141; sequence WGLAGYTALIIVITIQPEPLL. Residues 142 to 151 are Cytoplasmic-facing; it reads TPQFAVERCS. A helical membrane pass occupies residues 152 to 172; the sequence is EIVIGIVCAIMADLLFSPRSI. The Periplasmic segment spans residues 173–369; the sequence is KQEVDRELES…RTTLSCILGT (197 aa). Residues 370 to 390 traverse the membrane as a helical segment; that stretch reads LFWLWTGWTSGSGAMVMIAVV. Residues 391 to 406 lie on the Cytoplasmic side of the membrane; sequence TSLAMRLPNPRMVAID. The chain crosses the membrane as a helical span at residues 407–427; it reads FIYGTLAALPLGLLYFLVIIP. The Periplasmic segment spans residues 428–430; sequence NTQ. Residues 431 to 451 traverse the membrane as a helical segment; sequence QSMLLLCISLAVLGFFLGIEV. Residues 452-458 lie on the Cytoplasmic side of the membrane; the sequence is QKRRLGS. The chain crosses the membrane as a helical span at residues 459-479; the sequence is MGALASTINIIVLDNPMTFHF. Residues 480–481 lie on the Periplasmic side of the membrane; that stretch reads SQ. A helical membrane pass occupies residues 482–502; that stretch reads FLDSALGQIVGCVLAFTVILL. The Cytoplasmic portion of the chain corresponds to 503–655; the sequence is VRDKSRDRTG…HKYQHALTDS (153 aa).

It belongs to the aromatic acid exporter ArAE (TC 2.A.85) family.

The protein localises to the cell inner membrane. Functionally, forms an efflux pump with AaeA. Could function as a metabolic relief valve, allowing to eliminate certain compounds when they accumulate to high levels in the cell. The protein is p-hydroxybenzoic acid efflux pump subunit AaeB of Shigella flexneri.